The following is a 123-amino-acid chain: Large ribosomal subunit protein eL8 (123 aa).

Belongs to the eukaryotic ribosomal protein eL8 family. As to quaternary structure, part of the 50S ribosomal subunit. Probably part of the RNase P complex.

It localises to the cytoplasm. Its function is as follows. Multifunctional RNA-binding protein that recognizes the K-turn motif in ribosomal RNA, the RNA component of RNase P, box H/ACA, box C/D and box C'/D' sRNAs. This chain is Large ribosomal subunit protein eL8, found in Methanothermobacter thermautotrophicus (strain ATCC 29096 / DSM 1053 / JCM 10044 / NBRC 100330 / Delta H) (Methanobacterium thermoautotrophicum).